The sequence spans 141 residues: Transcription antitermination protein NusB (141 aa).

This sequence belongs to the NusB family.

In terms of biological role, involved in transcription antitermination. Required for transcription of ribosomal RNA (rRNA) genes. Binds specifically to the boxA antiterminator sequence of the ribosomal RNA (rrn) operons. The chain is Transcription antitermination protein NusB from Clostridium botulinum (strain Loch Maree / Type A3).